We begin with the raw amino-acid sequence, 503 residues long: Rhomboid-type serine protease 2 (503 aa).

The span at 1–11 (MAAQSYYNGAY) shows a compositional bias: polar residues. The disordered stretch occupies residues 1–66 (MAAQSYYNGA…SLRYSQQSIG (66 aa)). Residues 1 to 136 (MAAQSYYNGA…QKKKGFFQKK (136 aa)) lie on the Cytoplasmic side of the membrane. The chain crosses the membrane as a helical span at residues 137-157 (IAYVTYILTIAQIIVFIVELV). Residues 158–253 (KMGQLTGSPI…DKPAPDQWFR (96 aa)) lie on the Extracellular side of the membrane. The helical transmembrane segment at 254 to 274 (FIIPMFLHSGFVHIGFNLLVQ) threads the bilayer. Residues 275-283 (MTMGADMER) lie on the Cytoplasmic side of the membrane. The helical transmembrane segment at 284–304 (MIGWWRYGLVYLSSGIWGFVL) threads the bilayer. At 305–316 (GGNYAGQGEASC) the chain is on the extracellular side. A helical transmembrane segment spans residues 317–337 (GCSGALFGILALFVLDLLYGW). S319 (nucleophile) is an active-site residue. The Cytoplasmic segment spans residues 338 to 342 (NDRQN). Residues 343–363 (PWVELIIMVLGIAVSFVLGLL) form a helical membrane-spanning segment. The Extracellular portion of the chain corresponds to 364 to 365 (PG). The chain crosses the membrane as a helical span at residues 366–386 (LDNFSHLGGFTMGLALGLCVM). Residue H371 is part of the active site. The Cytoplasmic segment spans residues 387–449 (RSPNALRERI…FAGRKPLWWA (63 aa)). Residues 450-470 (WWLVRLGALVAVLIGFILLIV) traverse the membrane as a helical segment. Residues 471–503 (NFYKYPSSNCSWCYRFSCLPVNGWCDQGNLFSR) lie on the Extracellular side of the membrane.

The protein belongs to the peptidase S54 family.

The protein localises to the membrane. The enzyme catalyses Cleaves type-1 transmembrane domains using a catalytic dyad composed of serine and histidine that are contributed by different transmembrane domains.. Its function is as follows. Probable rhomboid-type serine protease that catalyzes intramembrane proteolysis. The polypeptide is Rhomboid-type serine protease 2 (Emericella nidulans (strain FGSC A4 / ATCC 38163 / CBS 112.46 / NRRL 194 / M139) (Aspergillus nidulans)).